Reading from the N-terminus, the 352-residue chain is Divinyl chlorophyll a/b light-harvesting protein PcbB (352 aa).

6 helical membrane-spanning segments follow: residues 27–47 (FIAA…AFTL), 89–109 (CTVI…GGIL), 142–162 (FILG…VEWA), 203–223 (VMGG…FHII), 243–263 (AVLS…AFWS), and 307–327 (LANV…WHAL).

This sequence belongs to the PsbB/PsbC family. IsiA/Pcb subfamily. In terms of assembly, the antenna complex consists of divinyl chlorophylls (a and b) and divinyl chlorophyll a/b binding proteins and binds more divinyl chlorophyll b than does the antenna complex from high-light-adapted Prochlorococcus. Divinyl chlorophyll a is required as a cofactor. The cofactor is divinyl chlorophyll b.

It is found in the cellular thylakoid membrane. In terms of biological role, the antenna complex functions as a light receptor, it captures and delivers excitation energy to photosystems II and I. The Prochlorales pcb genes are not related to higher plant LHCs. The polypeptide is Divinyl chlorophyll a/b light-harvesting protein PcbB (pcbB) (Prochlorococcus marinus (strain NATL2A)).